Here is a 240-residue protein sequence, read N- to C-terminus: Adenylate dimethylallyltransferase (240 aa).

It belongs to the isopentenyl transferase family.

It catalyses the reaction dimethylallyl diphosphate + AMP = N(6)-(dimethylallyl)adenosine 5'-phosphate + diphosphate. Its function is as follows. Transfers dimethylallyl groups to AMP as part of the biosynthesis of cytokinin phytohormones. This chain is Adenylate dimethylallyltransferase (izt), found in Agrobacterium tumefaciens (strain Ach5).